The following is a 682-amino-acid chain: Epithelial sodium channel subunit alpha (682 aa).

Over 1 to 111 (MLMRLLPLPS…CSKHNRMKTA (111 aa)) the chain is Cytoplasmic. Residues 34 to 69 (AQGPLPPQPLQGPLKGDKCEQPGLGPEPTAPQQHTE) are disordered. Residues 112–132 (FWAVLWLCTFGMMYWQFALLF) form a helical membrane-spanning segment. The Extracellular portion of the chain corresponds to 133–586 (GEYFSYPVSL…SQWSLWFGSS (454 aa)). Disulfide bonds link cysteine 159-cysteine 329, cysteine 253-cysteine 260, cysteine 306-cysteine 313, cysteine 418-cysteine 503, cysteine 440-cysteine 480, cysteine 440-cysteine 499, cysteine 444-cysteine 495, cysteine 453-cysteine 480, cysteine 453-cysteine 503, and cysteine 455-cysteine 469. Asparagine 191 carries N-linked (GlcNAc...) asparagine glycosylation. The gating release of inhibition by proteolysis (GRIP); protease-sensitive region that is responsible for the proteolytic activation of the channel stretch occupies residues 201-267 (RSRRSLADTL…SDCFYQTSSS (67 aa)). Residues 221 to 240 (PEPRRARSSDPSSVRDNNPR) are disordered. Residue asparagine 504 is glycosylated (N-linked (GlcNAc...) asparagine). A helical membrane pass occupies residues 587-607 (VLSVVEMAEFMFDLLVITLLM). At 608–682 (LLRRFRSRYW…SSAACAPREP (75 aa)) the chain is on the cytoplasmic side. A PY motif; recruits WW domain-containing proteins and is thereby required for ubiquitination and inhibition of the channel by NEDD4 and NEDD4L motif is present at residues 653 to 657 (PPPAY).

This sequence belongs to the amiloride-sensitive sodium channel (TC 1.A.6) family. SCNN1A subfamily. In terms of assembly, heterotrimer; containing an alpha/SCNN1A, a beta/SCNN1B and a gamma/SCNN1G subunit. Interacts with WWP1 (via WW domains). Interacts with WWP2 (via WW domains); inhibits the channel. Interacts with BPIFA1; the interaction is indirect via SCNN1B and inhibits the proteolytic processing of SCNN1A and SCNN1G and the activation of ENaC. Interacts with the full-length immature form of PCSK9 (pro-PCSK9). In terms of processing, ubiquitinated. Can be ubiquitinated at multiple sites and undergo monoubiquitination and polyubiquitination. Ubiquitination by NEDD4 or NEDD4L inhibits the ENaC channel through endocytosis, intracellular retention and degradation of its individual subunits. N-glycosylated. Post-translationally, ENaC is activated through the proteolytic maturation of its subunits. Furin cleaves the SCNN1A subunit, which results in a stepwise increase in the open probability of the channel due to the release of an inhibitory tract. BPIFA1, which is recruited by the SCNN1B subunit, prevents the proteolytic activation of ENaC.

Its subcellular location is the apical cell membrane. It is found in the cell projection. It localises to the cilium. The protein localises to the cytoplasmic granule. The protein resides in the cytoplasm. Its subcellular location is the cytoplasmic vesicle. It is found in the secretory vesicle. It localises to the acrosome. The protein localises to the flagellum. The enzyme catalyses Na(+)(in) = Na(+)(out). Its activity is regulated as follows. Originally identified and characterized by its inhibition by the diuretic drug amiloride. This is one of the three pore-forming subunits of the heterotrimeric epithelial sodium channel (ENaC), a critical regulator of sodium balance and fluid homeostasis. ENaC operates in epithelial tissues, where it mediates the electrodiffusion of sodium ions from extracellular fluid through the apical membrane of cells, with water following osmotically. It plays a key role in maintaining sodium homeostasis through electrogenic sodium reabsorption in the kidneys. Additionally, ENaC is essential for airway surface liquid homeostasis, which is crucial for proper mucus clearance. The protein is Epithelial sodium channel subunit alpha of Cavia porcellus (Guinea pig).